The following is a 485-amino-acid chain: Glutamate--tRNA ligase (485 aa).

The short motif at 12-22 (PSPTGEPHVGT) is the 'HIGH' region element. C109, C111, C136, and H138 together coordinate Zn(2+). A 'KMSKS' region motif is present at residues 253 to 257 (KLSKR). ATP is bound at residue K256.

It belongs to the class-I aminoacyl-tRNA synthetase family. Glutamate--tRNA ligase type 1 subfamily. Monomer. Requires Zn(2+) as cofactor.

The protein localises to the cytoplasm. The catalysed reaction is tRNA(Glu) + L-glutamate + ATP = L-glutamyl-tRNA(Glu) + AMP + diphosphate. In terms of biological role, catalyzes the attachment of glutamate to tRNA(Glu) in a two-step reaction: glutamate is first activated by ATP to form Glu-AMP and then transferred to the acceptor end of tRNA(Glu). In Agrobacterium fabrum (strain C58 / ATCC 33970) (Agrobacterium tumefaciens (strain C58)), this protein is Glutamate--tRNA ligase.